The following is a 242-amino-acid chain: Dihydropteridine reductase (242 aa).

12 to 36 (LVYGGRGALGSRCVQAFRARNWWVA) contacts NADP(+). N6-succinyllysine is present on residues Lys71, Lys77, Lys94, and Lys100. The active-site Proton acceptor is Tyr148.

This sequence belongs to the short-chain dehydrogenases/reductases (SDR) family. As to quaternary structure, homodimer.

The enzyme catalyses 5,6,7,8-tetrahydropteridine + NAD(+) = 6,7-dihydropteridine + NADH + H(+). It carries out the reaction 5,6,7,8-tetrahydropteridine + NADP(+) = 6,7-dihydropteridine + NADPH + H(+). In terms of biological role, catalyzes the conversion of quinonoid dihydrobiopterin into tetrahydrobiopterin. The chain is Dihydropteridine reductase (QDPR) from Bos taurus (Bovine).